Reading from the N-terminus, the 473-residue chain is NAC domain-containing protein 68 (473 aa).

An NAC domain is found at 4–154; that stretch reads GLIGYRFSPT…KYVVCQVKYK (151 aa). The DNA-binding element occupies 108-160; that stretch reads IGIKKTLVYHEGKSPHGVRTPWVMHEYHITCLPHHKRKYVVCQVKYKGEAAEI. The interval 326-380 is disordered; sequence DHMPRKPVTGTIDYSSDSGSDAGSISTTSYQGTSSPNISVGSSSRHLSSCSSTDS. 2 stretches are compositionally biased toward low complexity: residues 340–354 and 364–379; these read SSDS…STTS and SVGS…SSTD. A helical membrane pass occupies residues 446-468; that stretch reads FIYLMKMIIGNIISVLLPVKRLI.

The protein localises to the membrane. Its subcellular location is the nucleus. Functionally, transcription activator activated by proteolytic cleavage through regulated intramembrane proteolysis (RIP) mediated by calpain or its functional homolog. Regulates cytokinin signaling during cell division. The sequence is that of NAC domain-containing protein 68 (NAC68) from Arabidopsis thaliana (Mouse-ear cress).